We begin with the raw amino-acid sequence, 159 residues long: Capsid protein (159 aa).

The protein belongs to the virgaviridae capsid protein family.

Its subcellular location is the virion. Functionally, capsid protein self-assembles to form rod-shaped virions about 18 nm in diameter with a central canal enclosing the viral genomic RNA. This chain is Capsid protein (CP), found in Tomato mosaic virus (strain Kazakh K2) (ToMV).